The following is a 139-amino-acid chain: Phosphoribosyl-AMP cyclohydrolase (139 aa).

Position 95 (aspartate 95) interacts with Mg(2+). Cysteine 96 lines the Zn(2+) pocket. Residues aspartate 97 and aspartate 99 each coordinate Mg(2+). Residues cysteine 114 and cysteine 121 each coordinate Zn(2+).

This sequence belongs to the PRA-CH family. Homodimer. Mg(2+) is required as a cofactor. Zn(2+) serves as cofactor.

It is found in the cytoplasm. The enzyme catalyses 1-(5-phospho-beta-D-ribosyl)-5'-AMP + H2O = 1-(5-phospho-beta-D-ribosyl)-5-[(5-phospho-beta-D-ribosylamino)methylideneamino]imidazole-4-carboxamide. Its pathway is amino-acid biosynthesis; L-histidine biosynthesis; L-histidine from 5-phospho-alpha-D-ribose 1-diphosphate: step 3/9. Functionally, catalyzes the hydrolysis of the adenine ring of phosphoribosyl-AMP. This is Phosphoribosyl-AMP cyclohydrolase from Chelativorans sp. (strain BNC1).